We begin with the raw amino-acid sequence, 546 residues long: Phosphoglucomutase (546 aa).

Ser-135 serves as the catalytic Phosphoserine intermediate. The Mg(2+) site is built by Ser-135, Asp-288, Asp-290, and Asp-292.

The protein belongs to the phosphohexose mutase family. Mg(2+) is required as a cofactor.

It carries out the reaction alpha-D-glucose 1-phosphate = alpha-D-glucose 6-phosphate. Its pathway is glycolipid metabolism; diglucosyl-diacylglycerol biosynthesis. Functionally, catalyzes the interconversion between glucose-6-phosphate and alpha-glucose-1-phosphate. This is the first step in the biosynthesis of diglucosyl-diacylglycerol (Glc2-DAG), i.e. a glycolipid found in the membrane, which is also used as a membrane anchor for lipoteichoic acid (LTA). This chain is Phosphoglucomutase (pgcA), found in Staphylococcus epidermidis (strain ATCC 35984 / DSM 28319 / BCRC 17069 / CCUG 31568 / BM 3577 / RP62A).